Reading from the N-terminus, the 247-residue chain is uncharacterized protein (247 aa).

Residues 161–187 are disordered; it reads KEQSDATSDATTSEKNKSPECPKATTE. A compositionally biased stretch (basic and acidic residues) spans 172–187; it reads TSEKNKSPECPKATTE.

This is an uncharacterized protein from Mus musculus (Mouse).